Reading from the N-terminus, the 597-residue chain is MERPAPLAVLPFSDPAHALSLLRGLSQLRAERKFLDVTLEAAGGRDFPAHRAVLAAASPYFRAMFAGQLRESRAERVRLHGVPPDMLQLLLDFSYTGRVAVSGDNAEPLLRAADLLQFPAVKEACGAFLQQQLDLANCLDMQDFAEAFSCSGLASAAQRFILRHVGELGAEQLERLPLARLLRYLRDDGLCVPKEEAAYQLALRWVRADPPRRAPHWPQLLEAVRLPFVRRFYLLAHVEAEPLVARCPPCLRLLREARDFQAARYDRHDRGPCPRMRPRPSTGLAEILVLVGGCDQDCDELVTVDCYNPQTGQWRYLAEFPDHLGGGYSIVALGNDIYVTGGSDGSRLYDCVWRYNSSVNEWTEVAPMLKAREYHSSSVLDGLLYVVAADSTERYDHATDSWEALQPMTYPMDNCSTTACRGRLYAIGSLAGKETMVIQCYDPDTDLWSLVNCGQLPPWSFAPKTVTLNGLMYFVRDDSAEVDVYNPTKDEWDKIPSMNQVHVGGSLAVLGGKLYVSGGYDNTFELSDVVEAYDPETRAWSVVGRLPEPTFWHGSVSIFRQFMPQTPAGGRGFELNSGSNDVDAGYHRLPQNPEELH.

Residues 35 to 103 (LDVTLEAAGG…SYTGRVAVSG (69 aa)) enclose the BTB domain. The BACK domain maps to 138 to 239 (CLDMQDFAEA…RRFYLLAHVE (102 aa)). 6 Kelch repeats span residues 287-335 (ILVL…ALGN), 336-382 (DIYV…VLDG), 384-422 (LYVV…ACRG), 423-470 (RLYA…TLNG), 472-512 (MYFV…VLGG), and 513-560 (KLYV…SIFR). The disordered stretch occupies residues 570–597 (GRGFELNSGSNDVDAGYHRLPQNPEELH).

Component of the BCR(KLHL21) E3 ubiquitin ligase complex, at least composed of CUL3, KLHL21 and RBX1.

It localises to the cytoplasm. Its subcellular location is the cytoskeleton. The protein resides in the spindle. The protein operates within protein modification; protein ubiquitination. Functionally, substrate-specific adapter of a BCR (BTB-CUL3-RBX1) E3 ubiquitin-protein ligase complex required for efficient chromosome alignment and cytokinesis. The BCR(KLHL21) E3 ubiquitin ligase complex regulates localization of the chromosomal passenger complex (CPC) from chromosomes to the spindle midzone in anaphase and mediates the ubiquitination of AURKB. Ubiquitination of AURKB by BCR(KLHL21) E3 ubiquitin ligase complex may not lead to its degradation by the proteasome. In Mus musculus (Mouse), this protein is Kelch-like protein 21 (Klhl21).